The chain runs to 408 residues: Peptidase T (408 aa).

His-78 contacts Zn(2+). Asp-80 is an active-site residue. Asp-140 provides a ligand contact to Zn(2+). Catalysis depends on Glu-173, which acts as the Proton acceptor. Positions 174, 196, and 379 each coordinate Zn(2+).

It belongs to the peptidase M20B family. It depends on Zn(2+) as a cofactor.

It localises to the cytoplasm. It catalyses the reaction Release of the N-terminal residue from a tripeptide.. In terms of biological role, cleaves the N-terminal amino acid of tripeptides. This is Peptidase T from Escherichia coli (strain K12 / MC4100 / BW2952).